Here is a 114-residue protein sequence, read N- to C-terminus: Ribulose bisphosphate carboxylase small subunit 2 (114 aa).

Belongs to the RuBisCO small chain family. As to quaternary structure, heterohexadecamer of 8 large and 8 small subunits. Forms a CsoS2-CsoS1-RuBisCO complex.

The protein localises to the carboxysome. RuBisCO catalyzes two reactions: the carboxylation of D-ribulose 1,5-bisphosphate, the primary event in carbon dioxide fixation, as well as the oxidative fragmentation of the pentose substrate. Both reactions occur simultaneously and in competition at the same active site. Although the small subunit is not catalytic it is essential for maximal activity. Its function is as follows. Replacing the endogenous type I ccbLS genes in H.neapolitanus with this carboxysomally targeted enzyme reconstitutes RuBisCO with about 25% of normal activity; the active enzyme is targeted to carboxysomes. The chain is Ribulose bisphosphate carboxylase small subunit 2 from Hydrogenovibrio crunogenus (strain DSM 25203 / XCL-2) (Thiomicrospira crunogena).